Consider the following 196-residue polypeptide: ATP-dependent Clp protease proteolytic subunit (196 aa).

Ser-99 (nucleophile) is an active-site residue. His-124 is an active-site residue.

It belongs to the peptidase S14 family. As to quaternary structure, fourteen ClpP subunits assemble into 2 heptameric rings which stack back to back to give a disk-like structure with a central cavity, resembling the structure of eukaryotic proteasomes.

The protein resides in the cytoplasm. It carries out the reaction Hydrolysis of proteins to small peptides in the presence of ATP and magnesium. alpha-casein is the usual test substrate. In the absence of ATP, only oligopeptides shorter than five residues are hydrolyzed (such as succinyl-Leu-Tyr-|-NHMec, and Leu-Tyr-Leu-|-Tyr-Trp, in which cleavage of the -Tyr-|-Leu- and -Tyr-|-Trp bonds also occurs).. Cleaves peptides in various proteins in a process that requires ATP hydrolysis. Has a chymotrypsin-like activity. Plays a major role in the degradation of misfolded proteins. In Helicobacter hepaticus (strain ATCC 51449 / 3B1), this protein is ATP-dependent Clp protease proteolytic subunit.